The primary structure comprises 227 residues: Cytochrome c oxidase subunit 2 (227 aa).

Residues 1 to 26 (MNTWMNFNLQNSNSPLMEQLMFFHNH) are Mitochondrial intermembrane-facing. The chain crosses the membrane as a helical span at residues 27 to 48 (SMLIILLITILVGYIMSSLLYN). Topologically, residues 49–62 (KLYNRYLLESQNVE) are mitochondrial matrix. A helical transmembrane segment spans residues 63-82 (IIWTILPAFMLIFIALPSLR). Residues 83–227 (LLYLLDDSNS…SFIKWISSNS (145 aa)) are Mitochondrial intermembrane-facing. Residues His-161, Cys-196, Glu-198, Cys-200, His-204, and Met-207 each coordinate Cu cation. Residue Glu-198 coordinates Mg(2+).

This sequence belongs to the cytochrome c oxidase subunit 2 family. In terms of assembly, component of the cytochrome c oxidase (complex IV, CIV), a multisubunit enzyme composed of a catalytic core of 3 subunits and several supernumerary subunits. The complex exists as a monomer or a dimer and forms supercomplexes (SCs) in the inner mitochondrial membrane with ubiquinol-cytochrome c oxidoreductase (cytochrome b-c1 complex, complex III, CIII). Cu cation serves as cofactor.

The protein resides in the mitochondrion inner membrane. The enzyme catalyses 4 Fe(II)-[cytochrome c] + O2 + 8 H(+)(in) = 4 Fe(III)-[cytochrome c] + 2 H2O + 4 H(+)(out). Functionally, component of the cytochrome c oxidase, the last enzyme in the mitochondrial electron transport chain which drives oxidative phosphorylation. The respiratory chain contains 3 multisubunit complexes succinate dehydrogenase (complex II, CII), ubiquinol-cytochrome c oxidoreductase (cytochrome b-c1 complex, complex III, CIII) and cytochrome c oxidase (complex IV, CIV), that cooperate to transfer electrons derived from NADH and succinate to molecular oxygen, creating an electrochemical gradient over the inner membrane that drives transmembrane transport and the ATP synthase. Cytochrome c oxidase is the component of the respiratory chain that catalyzes the reduction of oxygen to water. Electrons originating from reduced cytochrome c in the intermembrane space (IMS) are transferred via the dinuclear copper A center (CU(A)) of subunit 2 and heme A of subunit 1 to the active site in subunit 1, a binuclear center (BNC) formed by heme A3 and copper B (CU(B)). The BNC reduces molecular oxygen to 2 water molecules using 4 electrons from cytochrome c in the IMS and 4 protons from the mitochondrial matrix. The protein is Cytochrome c oxidase subunit 2 (COII) of Ctenocephalides felis (Cat flea).